A 317-amino-acid chain; its full sequence is Pinoresinol reductase 1 (317 aa).

Residues Thr18, Tyr20, Ile21, Arg41, Lys50, Ser90, Gly91, Arg95, Asn98, Ser121, and Glu122 each coordinate NADP(+). Met125 lines the (-)-pinoresinol pocket. Lys144 and Phe166 together coordinate NADP(+). The active-site Proton acceptor is the Lys144. (-)-pinoresinol-binding residues include Met177 and Val178.

It belongs to the NmrA-type oxidoreductase family. Isoflavone reductase subfamily. Forms homodimers. As to expression, expressed in roots and stems.

The catalysed reaction is (-)-lariciresinol + NADP(+) = (-)-pinoresinol + NADPH + H(+). It catalyses the reaction (+)-lariciresinol + NADP(+) = (+)-pinoresinol + NADPH + H(+). In terms of biological role, reductase involved in lignan biosynthesis. Involved in secondary cell wall biosynthesis in fiber cells. Unlike conventional pinoresinol reductases that can reduce both pinoresinol and lariciresinol, PRR1 shows a strict substrate preference toward pinoresinol. Active on both (+) and (-)-pinoresinol. Abstracts the 4R-hydride from the NADPH cofactor during catalysis. The protein is Pinoresinol reductase 1 of Arabidopsis thaliana (Mouse-ear cress).